Consider the following 34-residue polypeptide: Photosystem II reaction center protein T (34 aa).

A helical membrane pass occupies residues 3-23 (ALVYTFLLVSTLGIIFFAIFF).

This sequence belongs to the PsbT family. In terms of assembly, PSII is composed of 1 copy each of membrane proteins PsbA, PsbB, PsbC, PsbD, PsbE, PsbF, PsbH, PsbI, PsbJ, PsbK, PsbL, PsbM, PsbT, PsbY, PsbZ, Psb30/Ycf12, at least 3 peripheral proteins of the oxygen-evolving complex and a large number of cofactors. It forms dimeric complexes.

It localises to the plastid. Its subcellular location is the chloroplast thylakoid membrane. Functionally, found at the monomer-monomer interface of the photosystem II (PS II) dimer, plays a role in assembly and dimerization of PSII. PSII is a light-driven water plastoquinone oxidoreductase, using light energy to abstract electrons from H(2)O, generating a proton gradient subsequently used for ATP formation. This chain is Photosystem II reaction center protein T, found in Solanum lycopersicum (Tomato).